The primary structure comprises 119 residues: Achromolysin (119 aa).

This sequence belongs to the peptidase M4 family. Requires Ca(2+) as cofactor. Zn(2+) serves as cofactor.

Its subcellular location is the secreted. In terms of biological role, has staphylolytic activity. The chain is Achromolysin from Achromobacter lyticus.